The chain runs to 100 residues: Small ribosomal subunit protein uS14c (100 aa).

It belongs to the universal ribosomal protein uS14 family. Part of the 30S ribosomal subunit.

The protein resides in the plastid. It is found in the chloroplast. Binds 16S rRNA, required for the assembly of 30S particles. This is Small ribosomal subunit protein uS14c from Oedogonium cardiacum (Filamentous green alga).